The primary structure comprises 141 residues: Hemoglobin subunit alpha-2 (141 aa).

Residues 1–141 enclose the Globin domain; it reads VLSPADKNNV…VSTVLTSKYR (141 aa). His-58 contacts O2. His-87 contributes to the heme b binding site.

The protein belongs to the globin family. In terms of assembly, heterotetramer of two alpha chains and two beta chains. As to expression, red blood cells.

Functionally, involved in oxygen transport from the lung to the various peripheral tissues. The polypeptide is Hemoglobin subunit alpha-2 (Varecia variegata (Black-and-white ruffed lemur)).